Here is a 98-residue protein sequence, read N- to C-terminus: NADH-ubiquinone oxidoreductase chain 4L (98 aa).

3 helical membrane-spanning segments follow: residues 1 to 21 (MPVIYINLIAAFFMAFMGLLI), 29 to 49 (SLLCLEGMMLSLFILNSTLAL), and 61 to 81 (IILLVFAACEAALGLSLLVMV).

The protein belongs to the complex I subunit 4L family. In terms of assembly, core subunit of respiratory chain NADH dehydrogenase (Complex I) which is composed of 45 different subunits.

It is found in the mitochondrion inner membrane. The catalysed reaction is a ubiquinone + NADH + 5 H(+)(in) = a ubiquinol + NAD(+) + 4 H(+)(out). Functionally, core subunit of the mitochondrial membrane respiratory chain NADH dehydrogenase (Complex I) which catalyzes electron transfer from NADH through the respiratory chain, using ubiquinone as an electron acceptor. Part of the enzyme membrane arm which is embedded in the lipid bilayer and involved in proton translocation. In Echinops telfairi (Lesser hedgehog tenrec), this protein is NADH-ubiquinone oxidoreductase chain 4L (MT-ND4L).